Here is a 142-residue protein sequence, read N- to C-terminus: Nucleoside diphosphate kinase (142 aa).

6 residues coordinate ATP: Lys11, Phe59, Arg87, Thr93, Arg104, and Asn114. The active-site Pros-phosphohistidine intermediate is His117.

This sequence belongs to the NDK family. Mg(2+) is required as a cofactor.

Its subcellular location is the cytoplasm. The enzyme catalyses a 2'-deoxyribonucleoside 5'-diphosphate + ATP = a 2'-deoxyribonucleoside 5'-triphosphate + ADP. It carries out the reaction a ribonucleoside 5'-diphosphate + ATP = a ribonucleoside 5'-triphosphate + ADP. Its function is as follows. Major role in the synthesis of nucleoside triphosphates other than ATP. The ATP gamma phosphate is transferred to the NDP beta phosphate via a ping-pong mechanism, using a phosphorylated active-site intermediate. The polypeptide is Nucleoside diphosphate kinase (Hyperthermus butylicus (strain DSM 5456 / JCM 9403 / PLM1-5)).